A 108-amino-acid polypeptide reads, in one-letter code: Nucleoid-associated protein BP1550 (108 aa).

A disordered region spans residues 87 to 108; sequence SQEKMASVTAGMPLPPGMKLPF. The segment covering 99 to 108 has biased composition (pro residues); that stretch reads PLPPGMKLPF.

The protein belongs to the YbaB/EbfC family. In terms of assembly, homodimer.

The protein resides in the cytoplasm. It is found in the nucleoid. Functionally, binds to DNA and alters its conformation. May be involved in regulation of gene expression, nucleoid organization and DNA protection. In Bordetella pertussis (strain Tohama I / ATCC BAA-589 / NCTC 13251), this protein is Nucleoid-associated protein BP1550.